A 640-amino-acid chain; its full sequence is Glycosyltransferase-like protein gnt14 (640 aa).

The Cytoplasmic segment spans residues Met-1 to Arg-14. The helical; Signal-anchor for type II membrane protein transmembrane segment at Leu-15 to Ile-35 threads the bilayer. Residues Gln-36–Trp-640 lie on the Extracellular side of the membrane. 2 disordered regions span residues Pro-63 to Ser-184 and Asn-254 to Tyr-277. A compositionally biased stretch (low complexity) spans Ile-65–Pro-171. An N-linked (GlcNAc...) asparagine glycan is attached at Asn-68. Residues Asn-410 and Asn-539 are each glycosylated (N-linked (GlcNAc...) asparagine).

Belongs to the glycosyltransferase 8 family. Highly divergent.

It localises to the membrane. This chain is Glycosyltransferase-like protein gnt14 (gnt14), found in Dictyostelium discoideum (Social amoeba).